Here is a 236-residue protein sequence, read N- to C-terminus: Protein N-lysine methyltransferase METTL21A (236 aa).

S-adenosyl-L-methionine contacts are provided by residues tryptophan 47, 73 to 75 (GAG), aspartate 112, tryptophan 143, and alanine 161.

This sequence belongs to the methyltransferase superfamily. METTL21 family. Interacts with heat shock 70 family members; at least some of these proteins are methylation substrates.

The protein localises to the cytoplasm. It carries out the reaction L-lysyl-[protein] + 3 S-adenosyl-L-methionine = N(6),N(6),N(6)-trimethyl-L-lysyl-[protein] + 3 S-adenosyl-L-homocysteine + 3 H(+). Functionally, protein-lysine methyltransferase that selectively trimethylates residues in heat shock protein 70 (HSP70) family members. Contributes to the in vivo trimethylation of Lys residues in HSPA1 and HSPA8. In vitro methylates 'Lys-561' in HSPA1, 'Lys-564' in HSPA2, 'Lys-585' in HSPA5, 'Lys-563' in HSPA6 and 'Lys-561' in HSPA8. This Pongo abelii (Sumatran orangutan) protein is Protein N-lysine methyltransferase METTL21A (METTL21A).